The following is a 252-amino-acid chain: Chitooligosaccharide deacetylase (252 aa).

The Mg(2+) site is built by histidine 61 and histidine 125.

The protein belongs to the YdjC deacetylase family. ChbG subfamily. Homodimer. Mg(2+) serves as cofactor.

The protein resides in the cytoplasm. It catalyses the reaction N,N'-diacetylchitobiose + H2O = N-acetyl-beta-D-glucosaminyl-(1-&gt;4)-D-glucosamine + acetate. It carries out the reaction diacetylchitobiose-6'-phosphate + H2O = N'-monoacetylchitobiose-6'-phosphate + acetate. Its pathway is glycan degradation; chitin degradation. Involved in the degradation of chitin. ChbG is essential for growth on the acetylated chitooligosaccharides chitobiose and chitotriose but is dispensable for growth on cellobiose and chitosan dimer, the deacetylated form of chitobiose. Deacetylation of chitobiose-6-P and chitotriose-6-P is necessary for both the activation of the chb promoter by the regulatory protein ChbR and the hydrolysis of phosphorylated beta-glucosides by the phospho-beta-glucosidase ChbF. Catalyzes the removal of only one acetyl group from chitobiose-6-P to yield monoacetylchitobiose-6-P, the inducer of ChbR and the substrate of ChbF. This Salmonella newport (strain SL254) protein is Chitooligosaccharide deacetylase.